Consider the following 237-residue polypeptide: Survival of motor neuron-related-splicing factor 30 (237 aa).

Residues 52 to 69 (SQPAEGTTSTKSSETVAP) show a composition bias toward polar residues. 2 disordered regions span residues 52–73 (SQPA…SHSW) and 149–198 (REYK…RSIF). Residues 72-132 (SWRVGDHCMA…KKVEEGRIRD (61 aa)) form the Tudor domain. The short motif at 142-160 (KELQAEQREYKKKKAQKKV) is the Nuclear localization signal element. A compositionally biased stretch (basic residues) spans 151 to 161 (YKKKKAQKKVQ). Residues 162-175 (RMKELEQEREDQKS) show a composition bias toward basic and acidic residues. Polar residues predominate over residues 176–185 (KWQQFNNKAY).

This sequence belongs to the SMN family. Associates with spliceosomes.

It localises to the nucleus speckle. The protein localises to the nucleus. It is found in the cajal body. Functionally, involved in spliceosome assembly. The protein is Survival of motor neuron-related-splicing factor 30 (smndc1) of Danio rerio (Zebrafish).